The chain runs to 517 residues: Ribonuclease Y (517 aa).

A helical membrane pass occupies residues Glu-2–Ile-22. Positions Thr-207–Leu-267 constitute a KH domain. Residues Val-333–Ser-426 enclose the HD domain.

It belongs to the RNase Y family.

Its subcellular location is the cell membrane. Functionally, endoribonuclease that initiates mRNA decay. This chain is Ribonuclease Y, found in Petrotoga mobilis (strain DSM 10674 / SJ95).